The sequence spans 362 residues: Endopolygalacturonase II (362 aa).

Positions 1–21 are cleaved as a signal peptide; sequence MHSFASLLAYGLVAGATFASA. Residues 22–27 constitute a propeptide that is removed on maturation; the sequence is SPIEAR. C30 and C45 are oxidised to a cystine. One copy of the PbH1 1 repeat lies at 156–186; it reads ANDITFTDVTINNADGDTQGGHNTDAFDVGN. D201 functions as the Proton donor in the catalytic mechanism. C203 and C219 are oxidised to a cystine. PbH1 repeat units lie at residues 209–229, 238–259, 267–289, and 301–322; these read GENIWFTGGTCIGGHGLSIGS, VKNVTIEHSTVSNSENAVRIKT, VSEITYSNIVMSGISDYGVVIQQ, and TNGVTIQDVKLESVTGSVDSGA. H223 is a catalytic residue. N-linked (GlcNAc...) (high mannose) asparagine glycosylation occurs at N240. Cystine bridges form between C329-C334 and C353-C362.

The protein belongs to the glycosyl hydrolase 28 family.

It localises to the secreted. It carries out the reaction (1,4-alpha-D-galacturonosyl)n+m + H2O = (1,4-alpha-D-galacturonosyl)n + (1,4-alpha-D-galacturonosyl)m.. In terms of biological role, involved in maceration and soft-rotting of plant tissue. Hydrolyzes the 1,4-alpha glycosidic bonds of de-esterified pectate in the smooth region of the plant cell wall. In Aspergillus niger (strain ATCC 1015 / CBS 113.46 / FGSC A1144 / LSHB Ac4 / NCTC 3858a / NRRL 328 / USDA 3528.7), this protein is Endopolygalacturonase II (pgaII).